The sequence spans 576 residues: Proteinaceous RNase P 3 (576 aa).

Positions 65 to 75 are enriched in basic and acidic residues; the sequence is NRRSRHDDESP. A disordered region spans residues 65–88; that stretch reads NRRSRHDDESPKNPNKKKKGNRNP. PPR repeat units lie at residues 88 to 123, 129 to 166, 167 to 201, and 204 to 238; these read PEKSLLINLHSCSKRKDLSAALALYDAAITSSDIRL, QSLLYLCSAFISDPSLQTVAIDRGFQIFDRMVSSGISP, NESSVTAVARLAAAKGDGDYAFKLVKDLVAVGGVS, and RLRTYAPALLCFCDTLEAEKGYEVEDHMDASGIVL. The PRORP domain occupies 335 to 570; it reads SSAGKCLSCD…KEESLRSWMC (236 aa). Residues cysteine 340 and cysteine 343 each contribute to the Zn(2+) site. Residues aspartate 402, aspartate 480, aspartate 481, and aspartate 499 each contribute to the Mn(2+) site. Zn(2+)-binding residues include histidine 553 and cysteine 570.

It belongs to the PPR family. P subfamily. Mg(2+) is required as a cofactor. Mn(2+) serves as cofactor.

It localises to the nucleus. The catalysed reaction is Endonucleolytic cleavage of RNA, removing 5'-extranucleotides from tRNA precursor.. Endonuclease RNase P responsible for the 5' maturation of tRNA precursors. Also involved in the maturation of mRNA and small nucleolar RNA (snoRNA). The chain is Proteinaceous RNase P 3 (PRORP3) from Arabidopsis thaliana (Mouse-ear cress).